The primary structure comprises 910 residues: Leucine--tRNA ligase (910 aa).

The short motif at 42 to 52 is the 'HIGH' region element; sequence PYPSGKLHMGH. Residues 668 to 672 carry the 'KMSKS' region motif; it reads KMSKS. Lys671 lines the ATP pocket.

This sequence belongs to the class-I aminoacyl-tRNA synthetase family.

It localises to the cytoplasm. The enzyme catalyses tRNA(Leu) + L-leucine + ATP = L-leucyl-tRNA(Leu) + AMP + diphosphate. This Neisseria meningitidis serogroup A / serotype 4A (strain DSM 15465 / Z2491) protein is Leucine--tRNA ligase.